Reading from the N-terminus, the 280-residue chain is MKQHTLAEAIAHTGVGLHSGVSTHVRILPADAGSGRYFVRVDLPDSPTIPAQVAVVSQTVLSTQLGGGETGVRTVEHLLAALAGMGVDNARIEIDGPEIPLLDGSAQEWVTSIAEVGLVAQAVTNNLASFDIQEPIWIHQDDAFVAAIPASETRFSYGIDFDLPAIGNQWYSWSLTTEPDTSFAQEIAPARTFGLLHQIEYLQKSGLIKGGSLDNALICGPDGWVNPPLRFANEPVRHKILDLVGDLSLLGYFPRAHFLAYKASHNLHIQLAQRILALSN.

His-77, His-238, and Asp-242 together coordinate Zn(2+). His-265 functions as the Proton donor in the catalytic mechanism.

The protein belongs to the LpxC family. Zn(2+) serves as cofactor.

It carries out the reaction a UDP-3-O-[(3R)-3-hydroxyacyl]-N-acetyl-alpha-D-glucosamine + H2O = a UDP-3-O-[(3R)-3-hydroxyacyl]-alpha-D-glucosamine + acetate. It functions in the pathway glycolipid biosynthesis; lipid IV(A) biosynthesis; lipid IV(A) from (3R)-3-hydroxytetradecanoyl-[acyl-carrier-protein] and UDP-N-acetyl-alpha-D-glucosamine: step 2/6. In terms of biological role, catalyzes the hydrolysis of UDP-3-O-myristoyl-N-acetylglucosamine to form UDP-3-O-myristoylglucosamine and acetate, the committed step in lipid A biosynthesis. The sequence is that of UDP-3-O-acyl-N-acetylglucosamine deacetylase from Nostoc sp. (strain PCC 7120 / SAG 25.82 / UTEX 2576).